Reading from the N-terminus, the 581-residue chain is Arginine--tRNA ligase (581 aa).

The 'HIGH' region motif lies at 126–136; sequence PNLAKEMHVGH.

It belongs to the class-I aminoacyl-tRNA synthetase family. Monomer.

The protein localises to the cytoplasm. The catalysed reaction is tRNA(Arg) + L-arginine + ATP = L-arginyl-tRNA(Arg) + AMP + diphosphate. This Shewanella frigidimarina (strain NCIMB 400) protein is Arginine--tRNA ligase.